Here is a 108-residue protein sequence, read N- to C-terminus: Cell division topological specificity factor (108 aa).

The protein belongs to the MinE family.

Functionally, prevents the cell division inhibition by proteins MinC and MinD at internal division sites while permitting inhibition at polar sites. This ensures cell division at the proper site by restricting the formation of a division septum at the midpoint of the long axis of the cell. The polypeptide is Cell division topological specificity factor (Prochlorococcus marinus (strain AS9601)).